Reading from the N-terminus, the 88-residue chain is Small ribosomal subunit protein bS18 (88 aa).

Residues 1–26 (MAFAQSGGAGGGGGQRRPFFRRRKTC) form a disordered region.

Belongs to the bacterial ribosomal protein bS18 family. Part of the 30S ribosomal subunit. Forms a tight heterodimer with protein bS6.

In terms of biological role, binds as a heterodimer with protein bS6 to the central domain of the 16S rRNA, where it helps stabilize the platform of the 30S subunit. The polypeptide is Small ribosomal subunit protein bS18 (Xanthobacter autotrophicus (strain ATCC BAA-1158 / Py2)).